Consider the following 479-residue polypeptide: Poly(A) polymerase catalytic subunit (479 aa).

Catalysis depends on residues aspartate 202 and aspartate 204. Ca(2+) contacts are provided by aspartate 202, aspartate 204, and aspartate 253.

It belongs to the poxviridae poly(A) polymerase catalytic subunit family. As to quaternary structure, heterodimer of a large (catalytic) subunit and a small (regulatory) subunit.

The enzyme catalyses RNA(n) + ATP = RNA(n)-3'-adenine ribonucleotide + diphosphate. Its function is as follows. Polymerase that creates the 3'-poly(A) tail of mRNA's. This chain is Poly(A) polymerase catalytic subunit (OPG063), found in Homo sapiens (Human).